We begin with the raw amino-acid sequence, 373 residues long: Muscleblind-like protein 2 (373 aa).

C3H1-type zinc fingers lie at residues 13 to 41, 47 to 73, 176 to 204, and 212 to 238; these read WLTL…HPPK, NGRV…HPPT, TDKL…HPAD, and DNTV…HPPA.

It belongs to the muscleblind family. As to quaternary structure, interacts with ITGA3. As to expression, expressed in heart, brain, placenta, lung, liver, skeletal muscle, kidney and pancreas.

Its subcellular location is the nucleus. It localises to the cytoplasm. In terms of biological role, mediates pre-mRNA alternative splicing regulation. Acts either as activator or repressor of splicing on specific pre-mRNA targets. Inhibits cardiac troponin-T (TNNT2) pre-mRNA exon inclusion but induces insulin receptor (IR) pre-mRNA exon inclusion in muscle. Antagonizes the alternative splicing activity pattern of CELF proteins. RNA-binding protein that binds to 5'ACACCC-3' core sequence, termed zipcode, within the 3'UTR of ITGA3. Binds to CUG triplet repeat expansion in myotonic dystrophy muscle cells by sequestering the target RNAs. Together with RNA binding proteins RBPMS and RBFOX2, activates vascular smooth muscle cells alternative splicing events. Regulates NCOR2 alternative splicing. Seems to regulate expression and localization of ITGA3 by transporting it from the nucleus to cytoplasm at adhesion plaques. May play a role in myotonic dystrophy pathophysiology (DM). In Homo sapiens (Human), this protein is Muscleblind-like protein 2 (MBNL2).